The primary structure comprises 388 residues: Succinate--CoA ligase [ADP-forming] subunit beta (388 aa).

Positions 9 to 244 (KQLFKEYGLP…PSQEDAREAH (236 aa)) constitute an ATP-grasp domain. ATP-binding positions include Lys-46, 53-55 (GRG), Glu-99, Thr-102, and Glu-107. 2 residues coordinate Mg(2+): Asn-199 and Asp-213. Substrate-binding positions include Asn-264 and 321-323 (GIV).

The protein belongs to the succinate/malate CoA ligase beta subunit family. Heterotetramer of two alpha and two beta subunits. Mg(2+) is required as a cofactor.

The catalysed reaction is succinate + ATP + CoA = succinyl-CoA + ADP + phosphate. The enzyme catalyses GTP + succinate + CoA = succinyl-CoA + GDP + phosphate. It participates in carbohydrate metabolism; tricarboxylic acid cycle; succinate from succinyl-CoA (ligase route): step 1/1. In terms of biological role, succinyl-CoA synthetase functions in the citric acid cycle (TCA), coupling the hydrolysis of succinyl-CoA to the synthesis of either ATP or GTP and thus represents the only step of substrate-level phosphorylation in the TCA. The beta subunit provides nucleotide specificity of the enzyme and binds the substrate succinate, while the binding sites for coenzyme A and phosphate are found in the alpha subunit. The protein is Succinate--CoA ligase [ADP-forming] subunit beta of Alteromonas mediterranea (strain DSM 17117 / CIP 110805 / LMG 28347 / Deep ecotype).